Consider the following 101-residue polypeptide: MSRRCELTGKAVQVGHLVSHSNRKTKCRFLPNLCNVTLQSDTLNRRVRLRVTAHALRSVEHRGGLDAFLVKAREIELSQTARLLKREIEKKIAEPATPAAA.

It belongs to the bacterial ribosomal protein bL28 family.

The sequence is that of Large ribosomal subunit protein bL28 from Methylorubrum extorquens (strain CM4 / NCIMB 13688) (Methylobacterium extorquens).